We begin with the raw amino-acid sequence, 547 residues long: Elongator complex protein 3 (547 aa).

A Radical SAM core domain is found at 82-372; the sequence is RTASGIAVVA…YRVQRDIPMP (291 aa). Residues Cys99, Cys109, and Cys112 each contribute to the [4Fe-4S] cluster site. Ser161 is subject to Phosphoserine. Position 164 (Lys164) interacts with acetyl-CoA. A Phosphotyrosine modification is found at Tyr202. The residue at position 229 (Lys229) is an N6-methyllysine. Position 251 is a phosphotyrosine (Tyr251). Residues 396–547 form the N-acetyltransferase domain; it reads IQCRDVRTRE…QGPYMVKTLE (152 aa). Acetyl-CoA contacts are provided by residues 474 to 477, 497 to 499, and Tyr530; these read ELHV and FGM.

Belongs to the ELP3 family. Component of the elongator complex which consists of ELP1, ELP2, ELP3, ELP4, ELP5 and ELP6. ELP1, ELP2 and ELP3 form the elongator core complex. Interacts with alpha-tubulin. [4Fe-4S] cluster is required as a cofactor. Post-translationally, tyrosine-phosphorylated; phosphorylation on Tyr-202 does not affect elongator complex integrity or ELP3 protein stability. Also serine/threonine-phosphorylated.

It localises to the cytoplasm. It is found in the nucleus. It catalyses the reaction uridine(34) in tRNA + acetyl-CoA + S-adenosyl-L-methionine + H2O = 5-(carboxymethyl)uridine(34) in tRNA + 5'-deoxyadenosine + L-methionine + CoA + 2 H(+). It participates in tRNA modification; 5-methoxycarbonylmethyl-2-thiouridine-tRNA biosynthesis. Functionally, catalytic tRNA acetyltransferase subunit of the elongator complex which is required for multiple tRNA modifications, including mcm5U (5-methoxycarbonylmethyl uridine), mcm5s2U (5-methoxycarbonylmethyl-2-thiouridine), and ncm5U (5-carbamoylmethyl uridine). In the elongator complex, acts as a tRNA uridine(34) acetyltransferase by mediating formation of carboxymethyluridine in the wobble base at position 34 in tRNAs. May also act as a protein lysine acetyltransferase by mediating acetylation of target proteins; such activity is however unclear in vivo and recent evidences suggest that ELP3 primarily acts as a tRNA acetyltransferase. Involved in neurogenesis: regulates the migration and branching of projection neurons in the developing cerebral cortex, through a process depending on alpha-tubulin acetylation. Required for acetylation of GJA1 in the developing cerebral cortex. The chain is Elongator complex protein 3 from Bos taurus (Bovine).